Reading from the N-terminus, the 401-residue chain is Pleckstrin homology-like domain family A member 1 (401 aa).

Disordered regions lie at residues 39–67 (IQKR…ARSS), 190–222 (QQQQ…AVAS), and 293–401 (KSTR…SNSA). The 133-residue stretch at 151-283 (LKEGVLEKRS…AEITLQMVQY (133 aa)) folds into the PH domain. The segment covering 190–204 (QQQQQQQQQQQQQQQ) has biased composition (low complexity). Residues 308-344 (PSQPQPQPQLQPQPQPQPQPQPQPQSQPQPQPQPKPQ) are compositionally biased toward pro residues. A 15 X 2 AA repeats of P-Q region spans residues 311–346 (PQPQPQLQPQPQPQPQPQPQPQSQPQPQPQPKPQPQ). Residues 352–378 (PHPHPHPHSHPHSHPHPHPHPHPHQIP) show a composition bias toward basic residues. Residues 352-389 (PHPHPHPHSHPHSHPHPHPHPHPHQIPHPHPQPHSQPH) are 14 X 2 AA repeats of P-H.

In terms of assembly, interacts with RPL14, EIF3S7 and PABPC4. Widely expressed with highest levels in pancreas. Strongly expressed by benign melanocytic nevi, and progressively reduced expressed in primary and metastatic melanomas (at protein level).

The protein localises to the cytoplasm. The protein resides in the cytoplasmic vesicle. It localises to the nucleus. Its subcellular location is the nucleolus. Its function is as follows. Seems to be involved in regulation of apoptosis. May be involved in detachment-mediated programmed cell death. May mediate apoptosis during neuronal development. May be involved in regulation of anti-apoptotic effects of IGF1. May be involved in translational regulation. This chain is Pleckstrin homology-like domain family A member 1 (PHLDA1), found in Homo sapiens (Human).